Consider the following 204-residue polypeptide: ATP phosphoribosyltransferase (204 aa).

This sequence belongs to the ATP phosphoribosyltransferase family. Short subfamily. In terms of assembly, heteromultimer composed of HisG and HisZ subunits.

The protein resides in the cytoplasm. The catalysed reaction is 1-(5-phospho-beta-D-ribosyl)-ATP + diphosphate = 5-phospho-alpha-D-ribose 1-diphosphate + ATP. It functions in the pathway amino-acid biosynthesis; L-histidine biosynthesis; L-histidine from 5-phospho-alpha-D-ribose 1-diphosphate: step 1/9. Functionally, catalyzes the condensation of ATP and 5-phosphoribose 1-diphosphate to form N'-(5'-phosphoribosyl)-ATP (PR-ATP). Has a crucial role in the pathway because the rate of histidine biosynthesis seems to be controlled primarily by regulation of HisG enzymatic activity. This Staphylococcus aureus (strain USA300) protein is ATP phosphoribosyltransferase.